Consider the following 306-residue polypeptide: MLNYVIKRLLGLIPTLFIVSVLVFLFVHMLPGDPARLIAGPEADAQVIELVRQQLGLDQPLYHQFWHYISNAVQGDFGLSMVSRRPVADEIASRFMPTLWLTITSMVWAVIFGMAAGIIAAVWRNRWPDRLSMTIAVSGISFPAFALGMLLIQVFSVELGWLPTVGADSWQHYILPSLTLGAAVAAVMARFTRASFVDVLSEDYMRTARAKGVSETWVVLKHGLRNAMIPVVTMMGLQFGFLLGGSIVVEKVFNWPGLGRLLVDSVEMRDYPVIQAEILLFSLEFILINLVVDVLYAAINPAIRYK.

Over methionine 1 to arginine 8 the chain is Cytoplasmic. The chain crosses the membrane as a helical span at residues leucine 9–methionine 29. Over leucine 30–threonine 102 the chain is Periplasmic. The 198-residue stretch at phenylalanine 95–valine 292 folds into the ABC transmembrane type-1 domain. The helical transmembrane segment at isoleucine 103–tryptophan 123 threads the bilayer. Residues arginine 124–threonine 134 lie on the Cytoplasmic side of the membrane. A helical membrane pass occupies residues isoleucine 135–phenylalanine 155. At serine 156–aspartate 168 the chain is on the periplasmic side. A helical transmembrane segment spans residues serine 169–alanine 189. Topologically, residues arginine 190 to methionine 228 are cytoplasmic. Residues isoleucine 229–valine 249 traverse the membrane as a helical segment. Residues glutamate 250–glutamate 277 lie on the Periplasmic side of the membrane. A helical membrane pass occupies residues isoleucine 278–alanine 298. At isoleucine 299 to lysine 306 the chain is on the cytoplasmic side.

The protein belongs to the binding-protein-dependent transport system permease family. The complex is composed of two ATP-binding proteins (GsiA), two transmembrane proteins (GsiC and GsiD) and a solute-binding protein (GsiB).

It is found in the cell inner membrane. In terms of biological role, part of the ABC transporter complex GsiABCD involved in glutathione import. Probably responsible for the translocation of the substrate across the membrane. In Escherichia coli O1:K1 / APEC, this protein is Glutathione transport system permease protein GsiC.